Here is a 128-residue protein sequence, read N- to C-terminus: NADPH-dependent 7-cyano-7-deazaguanine reductase (128 aa).

Cys34 acts as the Thioimide intermediate in catalysis. The active-site Proton donor is the Asp41. Residues 56 to 58 and 75 to 76 contribute to the substrate site; these read IEL and HE.

Belongs to the GTP cyclohydrolase I family. QueF type 1 subfamily.

The protein localises to the cytoplasm. It carries out the reaction 7-aminomethyl-7-carbaguanine + 2 NADP(+) = 7-cyano-7-deazaguanine + 2 NADPH + 3 H(+). Its pathway is tRNA modification; tRNA-queuosine biosynthesis. Functionally, catalyzes the NADPH-dependent reduction of 7-cyano-7-deazaguanine (preQ0) to 7-aminomethyl-7-deazaguanine (preQ1). The protein is NADPH-dependent 7-cyano-7-deazaguanine reductase of Ruthia magnifica subsp. Calyptogena magnifica.